The sequence spans 223 residues: Ribonuclease HII (223 aa).

The region spanning 1 to 219 is the RNase H type-2 domain; it reads MMIAGIDEAG…VENIREELEK (219 aa). The a divalent metal cation site is built by D7, E8, and D105.

The protein belongs to the RNase HII family. The cofactor is Mn(2+). Mg(2+) is required as a cofactor.

Its subcellular location is the cytoplasm. It carries out the reaction Endonucleolytic cleavage to 5'-phosphomonoester.. Its function is as follows. Endonuclease that specifically degrades the RNA of RNA-DNA hybrids. In Methanosarcina acetivorans (strain ATCC 35395 / DSM 2834 / JCM 12185 / C2A), this protein is Ribonuclease HII.